Here is a 309-residue protein sequence, read N- to C-terminus: Ribonuclease Z (309 aa).

7 residues coordinate Zn(2+): His-63, His-65, Asp-67, His-68, His-145, Asp-216, and His-274. Residue Asp-67 is the Proton acceptor of the active site.

It belongs to the RNase Z family. Homodimer. It depends on Zn(2+) as a cofactor.

The catalysed reaction is Endonucleolytic cleavage of RNA, removing extra 3' nucleotides from tRNA precursor, generating 3' termini of tRNAs. A 3'-hydroxy group is left at the tRNA terminus and a 5'-phosphoryl group is left at the trailer molecule.. Its function is as follows. Zinc phosphodiesterase, which displays some tRNA 3'-processing endonuclease activity. Probably involved in tRNA maturation, by removing a 3'-trailer from precursor tRNA. This Streptococcus mutans serotype c (strain ATCC 700610 / UA159) protein is Ribonuclease Z.